The primary structure comprises 363 residues: Spermidine/putrescine import ATP-binding protein PotA (363 aa).

An ABC transporter domain is found at 5–236 (IKLKHVRKEY…PVNDFVARFI (232 aa)). 38–45 (GPSGSGKT) contacts ATP.

The protein belongs to the ABC transporter superfamily. Spermidine/putrescine importer (TC 3.A.1.11.1) family. The complex is composed of two ATP-binding proteins (PotA), two transmembrane proteins (PotB and PotC) and a solute-binding protein (PotD).

It is found in the cell membrane. The enzyme catalyses ATP + H2O + polyamine-[polyamine-binding protein]Side 1 = ADP + phosphate + polyamineSide 2 + [polyamine-binding protein]Side 1.. Its function is as follows. Part of the ABC transporter complex PotABCD involved in spermidine/putrescine import. Responsible for energy coupling to the transport system. This chain is Spermidine/putrescine import ATP-binding protein PotA, found in Lactobacillus johnsonii (strain CNCM I-12250 / La1 / NCC 533).